Consider the following 114-residue polypeptide: T cell receptor beta variable 9 (114 aa).

The first 21 residues, 1–21 (MGFRLLCCVAFCLLGAGPVDS), serve as a signal peptide directing secretion. The Ig-like domain occupies 22–114 (GVTQTPKHLI…SALYFCASSV (93 aa)). The cysteines at positions 42 and 110 are disulfide-linked. A glycan (N-linked (GlcNAc...) asparagine) is linked at asparagine 96.

In terms of assembly, alpha-beta TR is a heterodimer composed of an alpha and beta chain; disulfide-linked. The alpha-beta TR is associated with the transmembrane signaling CD3 coreceptor proteins to form the TR-CD3 (TcR or TCR). The assembly of alpha-beta TR heterodimers with CD3 occurs in the endoplasmic reticulum where a single alpha-beta TR heterodimer associates with one CD3D-CD3E heterodimer, one CD3G-CD3E heterodimer and one CD247 homodimer forming a stable octameric structure. CD3D-CD3E and CD3G-CD3E heterodimers preferentially associate with TR alpha and TR beta chains, respectively. The association of the CD247 homodimer is the last step of TcR assembly in the endoplasmic reticulum and is required for transport to the cell surface.

The protein resides in the cell membrane. In terms of biological role, v region of the variable domain of T cell receptor (TR) beta chain that participates in the antigen recognition. Alpha-beta T cell receptors are antigen specific receptors which are essential to the immune response and are present on the cell surface of T lymphocytes. Recognize peptide-major histocompatibility (MH) (pMH) complexes that are displayed by antigen presenting cells (APC), a prerequisite for efficient T cell adaptive immunity against pathogens. Binding of alpha-beta TR to pMH complex initiates TR-CD3 clustering on the cell surface and intracellular activation of LCK that phosphorylates the ITAM motifs of CD3G, CD3D, CD3E and CD247 enabling the recruitment of ZAP70. In turn ZAP70 phosphorylates LAT, which recruits numerous signaling molecules to form the LAT signalosome. The LAT signalosome propagates signal branching to three major signaling pathways, the calcium, the mitogen-activated protein kinase (MAPK) kinase and the nuclear factor NF-kappa-B (NF-kB) pathways, leading to the mobilization of transcription factors that are critical for gene expression and essential for T cell growth and differentiation. The T cell repertoire is generated in the thymus, by V-(D)-J rearrangement. This repertoire is then shaped by intrathymic selection events to generate a peripheral T cell pool of self-MH restricted, non-autoaggressive T cells. Post-thymic interaction of alpha-beta TR with the pMH complexes shapes TR structural and functional avidity. The chain is T cell receptor beta variable 9 from Homo sapiens (Human).